The sequence spans 273 residues: Putative pyruvate, phosphate dikinase regulatory protein (273 aa).

149 to 156 (GPSRTSKT) is an ADP binding site.

It belongs to the pyruvate, phosphate/water dikinase regulatory protein family. PDRP subfamily.

It catalyses the reaction N(tele)-phospho-L-histidyl/L-threonyl-[pyruvate, phosphate dikinase] + ADP = N(tele)-phospho-L-histidyl/O-phospho-L-threonyl-[pyruvate, phosphate dikinase] + AMP + H(+). The catalysed reaction is N(tele)-phospho-L-histidyl/O-phospho-L-threonyl-[pyruvate, phosphate dikinase] + phosphate + H(+) = N(tele)-phospho-L-histidyl/L-threonyl-[pyruvate, phosphate dikinase] + diphosphate. Functionally, bifunctional serine/threonine kinase and phosphorylase involved in the regulation of the pyruvate, phosphate dikinase (PPDK) by catalyzing its phosphorylation/dephosphorylation. The polypeptide is Putative pyruvate, phosphate dikinase regulatory protein (Rickettsia typhi (strain ATCC VR-144 / Wilmington)).